The following is a 214-amino-acid chain: Probable nicotinate-nucleotide adenylyltransferase (214 aa).

It belongs to the NadD family.

The catalysed reaction is nicotinate beta-D-ribonucleotide + ATP + H(+) = deamido-NAD(+) + diphosphate. Its pathway is cofactor biosynthesis; NAD(+) biosynthesis; deamido-NAD(+) from nicotinate D-ribonucleotide: step 1/1. Its function is as follows. Catalyzes the reversible adenylation of nicotinate mononucleotide (NaMN) to nicotinic acid adenine dinucleotide (NaAD). This is Probable nicotinate-nucleotide adenylyltransferase from Rhodopirellula baltica (strain DSM 10527 / NCIMB 13988 / SH1).